The chain runs to 757 residues: Vitamin K-dependent gamma-carboxylase (757 aa).

The residue at position 2 (Ala2) is an N-acetylalanine. The Cytoplasmic segment spans residues 2–60; that stretch reads AVHRGSALVAPASDKVQKNKSAQTSGLKQGSRMEKILGFEWTDLSSWQSVVTLLNKPTD. A helical membrane pass occupies residues 61–81; sequence PANLAVFRFLFAFLMLLDIPQ. Residues 82–113 lie on the Lumenal side of the membrane; the sequence is ERGLSSLDRKYLDGLDVCRFPLLDALRPLPLD. Cys99 and Cys450 are oxidised to a cystine. A helical membrane pass occupies residues 114 to 134; that stretch reads WMYLVYTIMFLGALGMMLGLC. The Cytoplasmic portion of the chain corresponds to 135–136; that stretch reads YR. The helical transmembrane segment at 137–157 threads the bilayer; that stretch reads LSCVLFLLPYWYVFLLDKTSW. Topologically, residues 158 to 292 are lumenal; it reads NNHSYLYGLL…VSYFHCMNSQ (135 aa). The helical transmembrane segment at 293–313 threads the bilayer; the sequence is LFSIGMFPYVMLASSPLFCSA. The Cytoplasmic portion of the chain corresponds to 314 to 361; that stretch reads EWPRKLVARCPKRLQELLPTKAAPRPSASCVYKRSRGKAGPKPGLRHQ. Residues 362–382 traverse the membrane as a helical segment; it reads LGAIFTLLYLLEQLFLPYSHF. The Lumenal segment spans residues 383-757; it reads LTQGYNNWTN…PDSEHVHSEF (375 aa). The disordered stretch occupies residues 729–757; it reads EPVDESSASNTDSSNHPSEPDSEHVHSEF. Residues 734-745 show a composition bias toward polar residues; the sequence is SSASNTDSSNHP. Residues 746–757 show a composition bias toward basic and acidic residues; it reads SEPDSEHVHSEF.

This sequence belongs to the vitamin K-dependent gamma-carboxylase family. As to quaternary structure, monomer. May interact with CALU.

The protein localises to the endoplasmic reticulum membrane. The catalysed reaction is 4-carboxy-L-glutamyl-[protein] + 2,3-epoxyphylloquinone + H2O + H(+) = phylloquinol + L-glutamyl-[protein] + CO2 + O2. Functionally, mediates the vitamin K-dependent carboxylation of glutamate residues to calcium-binding gamma-carboxyglutamate (Gla) residues with the concomitant conversion of the reduced hydroquinone form of vitamin K to vitamin K epoxide. Catalyzes gamma-carboxylation of various proteins, such as blood coagulation factors (F2, F7, F9 and F10), osteocalcin (bglap and bglap2) or matrix Gla protein (MGP). This Mus musculus (Mouse) protein is Vitamin K-dependent gamma-carboxylase (Ggcx).